Here is a 292-residue protein sequence, read N- to C-terminus: 4-diphosphocytidyl-2-C-methyl-D-erythritol kinase (292 aa).

The active site involves Lys-13. Pro-97–Ser-107 contacts ATP. Asp-139 is a catalytic residue.

Belongs to the GHMP kinase family. IspE subfamily.

It catalyses the reaction 4-CDP-2-C-methyl-D-erythritol + ATP = 4-CDP-2-C-methyl-D-erythritol 2-phosphate + ADP + H(+). It participates in isoprenoid biosynthesis; isopentenyl diphosphate biosynthesis via DXP pathway; isopentenyl diphosphate from 1-deoxy-D-xylulose 5-phosphate: step 3/6. Functionally, catalyzes the phosphorylation of the position 2 hydroxy group of 4-diphosphocytidyl-2C-methyl-D-erythritol. The sequence is that of 4-diphosphocytidyl-2-C-methyl-D-erythritol kinase from Bacillus thuringiensis (strain Al Hakam).